The sequence spans 131 residues: Histone H2A.2 (131 aa).

The residue at position 2 (serine 2) is an N-acetylserine. An N6-acetyllysine mark is found at lysine 5 and lysine 8. An N5-methylglutamine modification is found at glutamine 106. Position 128 is a phosphoserine (serine 128). The [ST]-Q motif motif lies at 128 to 129 (SQ).

It belongs to the histone H2A family. As to quaternary structure, the nucleosome is a histone octamer containing two molecules each of H2A, H2B, H3 and H4 assembled in one H3-H4 heterotetramer and two H2A-H2B heterodimers. The octamer wraps approximately 147 bp of DNA. Phosphorylated to form H2AS128ph (gamma-H2A) in response to DNA double-strand breaks (DSBs) generated by exogenous genotoxic agents and by stalled replication forks. Phosphorylation is dependent on the DNA damage checkpoint kinases MEC1/ATR and TEL1/ATM, spreads on either side of a detected DSB site and may mark the surrounding chromatin for recruitment of proteins required for DNA damage signaling and repair. Gamma-H2A is removed from the DNA prior to the strand invasion-primer extension step of the repair process and subsequently dephosphorylated by PPH3, a component of the histone H2A phosphatase complex (HTP-C). Dephosphorylation is necessary for efficient recovery from the DNA damage checkpoint. Post-translationally, acetylated by ESA1 to form H2AK4ac and H2AK7ac.

Its subcellular location is the nucleus. It localises to the chromosome. Functionally, core component of nucleosome which plays a central role in DNA double strand break (DSB) repair. Nucleosomes wrap and compact DNA into chromatin, limiting DNA accessibility to the cellular machineries which require DNA as a template. Histones thereby play a central role in transcription regulation, DNA repair, DNA replication and chromosomal stability. DNA accessibility is regulated via a complex set of post-translational modifications of histones, also called histone code, and nucleosome remodeling. This is Histone H2A.2 (HTA2) from Candida glabrata (strain ATCC 2001 / BCRC 20586 / JCM 3761 / NBRC 0622 / NRRL Y-65 / CBS 138) (Yeast).